We begin with the raw amino-acid sequence, 190 residues long: UPF0301 protein TC_0483 (190 aa).

This sequence belongs to the UPF0301 (AlgH) family.

This Chlamydia muridarum (strain MoPn / Nigg) protein is UPF0301 protein TC_0483.